A 146-amino-acid chain; its full sequence is Large ribosomal subunit protein uL15 (146 aa).

Positions 1–18 (MKLHELKPSEGSRKERNR) are enriched in basic and acidic residues. Positions 1 to 50 (MKLHELKPSEGSRKERNRVGRGTGSGNGKTSGRGHKGQKARSGGGVRLGF) are disordered. The span at 21–31 (RGTGSGNGKTS) shows a compositional bias: gly residues.

The protein belongs to the universal ribosomal protein uL15 family. Part of the 50S ribosomal subunit.

In terms of biological role, binds to the 23S rRNA. This chain is Large ribosomal subunit protein uL15, found in Listeria welshimeri serovar 6b (strain ATCC 35897 / DSM 20650 / CCUG 15529 / CIP 8149 / NCTC 11857 / SLCC 5334 / V8).